Consider the following 129-residue polypeptide: Large ribosomal subunit protein bL17 (129 aa).

It belongs to the bacterial ribosomal protein bL17 family. In terms of assembly, part of the 50S ribosomal subunit. Contacts protein L32.

The sequence is that of Large ribosomal subunit protein bL17 from Pasteurella multocida (strain Pm70).